The chain runs to 241 residues: Large ribosomal subunit protein uL13c (241 aa).

The N-terminal 50 residues, 1–50, are a transit peptide targeting the chloroplast; it reads MAVLCSSSTVILSSSSVKSSGSERKSPFLGFSLTAISKPSVRVGIYANSK.

The protein belongs to the universal ribosomal protein uL13 family. Part of the 50S ribosomal subunit.

The protein resides in the plastid. It is found in the chloroplast. This is Large ribosomal subunit protein uL13c (RPL13) from Arabidopsis thaliana (Mouse-ear cress).